A 410-amino-acid chain; its full sequence is Dual-specificity RNA methyltransferase RlmN (410 aa).

A disordered region spans residues 7-26 (VSSENLDGQQQSSSTPASPA). Residues 15–26 (QQQSSSTPASPA) show a composition bias toward low complexity. E120 functions as the Proton acceptor in the catalytic mechanism. The region spanning 130-373 (TGSRKTLCIS…CTIRQTRGDD (244 aa)) is the Radical SAM core domain. C137 and C378 form a disulfide bridge. [4Fe-4S] cluster is bound by residues C144, C148, and C151. S-adenosyl-L-methionine is bound by residues 200–201 (GE), S232, 254–256 (SLH), and N335. C378 (S-methylcysteine intermediate) is an active-site residue.

It belongs to the radical SAM superfamily. RlmN family. [4Fe-4S] cluster is required as a cofactor.

It is found in the cytoplasm. It carries out the reaction adenosine(2503) in 23S rRNA + 2 reduced [2Fe-2S]-[ferredoxin] + 2 S-adenosyl-L-methionine = 2-methyladenosine(2503) in 23S rRNA + 5'-deoxyadenosine + L-methionine + 2 oxidized [2Fe-2S]-[ferredoxin] + S-adenosyl-L-homocysteine. The enzyme catalyses adenosine(37) in tRNA + 2 reduced [2Fe-2S]-[ferredoxin] + 2 S-adenosyl-L-methionine = 2-methyladenosine(37) in tRNA + 5'-deoxyadenosine + L-methionine + 2 oxidized [2Fe-2S]-[ferredoxin] + S-adenosyl-L-homocysteine. In terms of biological role, specifically methylates position 2 of adenine 2503 in 23S rRNA and position 2 of adenine 37 in tRNAs. m2A2503 modification seems to play a crucial role in the proofreading step occurring at the peptidyl transferase center and thus would serve to optimize ribosomal fidelity. The polypeptide is Dual-specificity RNA methyltransferase RlmN (Acinetobacter baumannii (strain AB307-0294)).